The following is a 350-amino-acid chain: tRNA uridine(34) hydroxylase (350 aa).

In terms of domain architecture, Rhodanese spans 146 to 240; that stretch reads DDPDALFIDM…YARKAREQGL (95 aa). Cysteine 200 serves as the catalytic Cysteine persulfide intermediate.

It belongs to the TrhO family.

It carries out the reaction uridine(34) in tRNA + AH2 + O2 = 5-hydroxyuridine(34) in tRNA + A + H2O. Catalyzes oxygen-dependent 5-hydroxyuridine (ho5U) modification at position 34 in tRNAs, the first step in 5-carboxymethoxyuridine (cmo5U) biosynthesis. May be part of an alternate pathway, which is able to bypass cmo5U biogenesis in a subset of tRNAs under aerobic conditions. The chain is tRNA uridine(34) hydroxylase from Escherichia coli O81 (strain ED1a).